Reading from the N-terminus, the 75-residue chain is Sec-independent protein translocase protein TatA (75 aa).

The helical transmembrane segment at 1 to 21 (MGISIWQLLIVLGIVILLFGT) threads the bilayer. Residues 41 to 75 (SMSDEEEKNAEQQPLEKQNAEQQAQAEDKPKEKQG) are disordered. Positions 56 to 65 (EKQNAEQQAQ) are enriched in low complexity. Positions 66–75 (AEDKPKEKQG) are enriched in basic and acidic residues.

This sequence belongs to the TatA/E family. As to quaternary structure, the Tat system comprises two distinct complexes: a TatABC complex, containing multiple copies of TatA, TatB and TatC subunits, and a separate TatA complex, containing only TatA subunits. Substrates initially bind to the TatABC complex, which probably triggers association of the separate TatA complex to form the active translocon.

The protein resides in the cell inner membrane. In terms of biological role, part of the twin-arginine translocation (Tat) system that transports large folded proteins containing a characteristic twin-arginine motif in their signal peptide across membranes. TatA could form the protein-conducting channel of the Tat system. The sequence is that of Sec-independent protein translocase protein TatA from Marinobacter nauticus (strain ATCC 700491 / DSM 11845 / VT8) (Marinobacter aquaeolei).